Consider the following 200-residue polypeptide: Probable GTP-binding protein EngB (200 aa).

Residues 25-199 (SGYEVAFAGR…ISLLDRWYEW (175 aa)) form the EngB-type G domain. GTP contacts are provided by residues 33-40 (GRSNAGKS), 60-64 (GRTQL), 78-81 (DLPG), 145-148 (TKAD), and 178-180 (FSS). Mg(2+) contacts are provided by Ser40 and Thr62.

It belongs to the TRAFAC class TrmE-Era-EngA-EngB-Septin-like GTPase superfamily. EngB GTPase family. Requires Mg(2+) as cofactor.

Its function is as follows. Necessary for normal cell division and for the maintenance of normal septation. The protein is Probable GTP-binding protein EngB of Legionella pneumophila (strain Corby).